The following is a 171-amino-acid chain: NADH-quinone oxidoreductase subunit I 1 (171 aa).

2 4Fe-4S ferredoxin-type domains span residues 39 to 71 (IVLT…LTKA) and 81 to 110 (EHFR…LTPD). Residues Cys51, Cys54, Cys57, Cys61, Cys90, Cys93, Cys96, and Cys100 each coordinate [4Fe-4S] cluster.

It belongs to the complex I 23 kDa subunit family. As to quaternary structure, NDH-1 is composed of 14 different subunits. Subunits NuoA, H, J, K, L, M, N constitute the membrane sector of the complex. [4Fe-4S] cluster is required as a cofactor.

The protein resides in the cell inner membrane. The enzyme catalyses a quinone + NADH + 5 H(+)(in) = a quinol + NAD(+) + 4 H(+)(out). Functionally, NDH-1 shuttles electrons from NADH, via FMN and iron-sulfur (Fe-S) centers, to quinones in the respiratory chain. The immediate electron acceptor for the enzyme in this species is believed to be ubiquinone. Couples the redox reaction to proton translocation (for every two electrons transferred, four hydrogen ions are translocated across the cytoplasmic membrane), and thus conserves the redox energy in a proton gradient. The chain is NADH-quinone oxidoreductase subunit I 1 from Rhodopseudomonas palustris (strain BisB5).